Consider the following 306-residue polypeptide: Protoheme IX farnesyltransferase (306 aa).

Transmembrane regions (helical) follow at residues 28-48 (LGLVQGNLIPAFAGAFIAIML), 53-73 (FLSSIPELLTMLFGTTLIMAG), 105-125 (ASILQLSLVLMIVGEMLLFTI), 127-147 (IETGIIGFLGIFGYVVLYSVW), 156-176 (TIIGSFPGAIPPLVGYAAIEP), 182-202 (AWMLFVIMFIWQPAHFYALAI), 227-244 (LSMLFWVMLLLPTPFFMQ), 246-266 (LGTVFMVLASVLNLGWLLLAI), and 283-303 (FVYSLNYLMIFFVMIVVVTLI).

Belongs to the UbiA prenyltransferase family. Protoheme IX farnesyltransferase subfamily. In terms of assembly, interacts with CtaA.

The protein resides in the cell membrane. It carries out the reaction heme b + (2E,6E)-farnesyl diphosphate + H2O = Fe(II)-heme o + diphosphate. It functions in the pathway porphyrin-containing compound metabolism; heme O biosynthesis; heme O from protoheme: step 1/1. Its function is as follows. Converts heme B (protoheme IX) to heme O by substitution of the vinyl group on carbon 2 of heme B porphyrin ring with a hydroxyethyl farnesyl side group. The sequence is that of Protoheme IX farnesyltransferase from Macrococcus caseolyticus (strain JCSC5402) (Macrococcoides caseolyticum).